The chain runs to 253 residues: 5'/3'-nucleotidase SurE (253 aa).

A divalent metal cation-binding residues include D8, D9, S39, and N92.

The protein belongs to the SurE nucleotidase family. The cofactor is a divalent metal cation.

The protein localises to the cytoplasm. It catalyses the reaction a ribonucleoside 5'-phosphate + H2O = a ribonucleoside + phosphate. The enzyme catalyses a ribonucleoside 3'-phosphate + H2O = a ribonucleoside + phosphate. The catalysed reaction is [phosphate](n) + H2O = [phosphate](n-1) + phosphate + H(+). Functionally, nucleotidase with a broad substrate specificity as it can dephosphorylate various ribo- and deoxyribonucleoside 5'-monophosphates and ribonucleoside 3'-monophosphates with highest affinity to 3'-AMP. Also hydrolyzes polyphosphate (exopolyphosphatase activity) with the preference for short-chain-length substrates (P20-25). Might be involved in the regulation of dNTP and NTP pools, and in the turnover of 3'-mononucleotides produced by numerous intracellular RNases (T1, T2, and F) during the degradation of various RNAs. The sequence is that of 5'/3'-nucleotidase SurE from Escherichia coli O17:K52:H18 (strain UMN026 / ExPEC).